A 431-amino-acid polypeptide reads, in one-letter code: Chorismate synthase 2, chloroplastic (431 aa).

The N-terminal 48 residues, 1–48, are a transit peptide targeting the chloroplast; it reads MASSMLTKQFLGAPFSSFGSGQQPSKLCSSNLRFPTHRSQPKRLEIQA. The interval 93–141 is disordered; that stretch reads DRRRPGQSRITTPRKETDTCKISSGTADGLTTGSPIKVEVPNTDQRGND. Residues 112–126 are compositionally biased toward polar residues; that stretch reads CKISSGTADGLTTGS.

This sequence belongs to the chorismate synthase family. As to quaternary structure, homotetramer. FMNH2 is required as a cofactor. Predominantly expressed in flowers and roots and, to a lesser extent, in stems, leaves, and cotyledons.

The protein resides in the plastid. It localises to the chloroplast. It carries out the reaction 5-O-(1-carboxyvinyl)-3-phosphoshikimate = chorismate + phosphate. It participates in metabolic intermediate biosynthesis; chorismate biosynthesis; chorismate from D-erythrose 4-phosphate and phosphoenolpyruvate: step 7/7. Functionally, catalyzes the last common step of the biosynthesis of aromatic amino acids, produced via the shikimic acid pathway. The polypeptide is Chorismate synthase 2, chloroplastic (CS2) (Solanum lycopersicum (Tomato)).